Here is a 366-residue protein sequence, read N- to C-terminus: MRDETPEQPALLRSGYTTGSCATVTSLAAARLLLSGIASDVAEIVLPKGQHVPMKLVFCRLLNDGKDGAEAGTIKDAGDDPDVTHGAIVFARVRLADAPGVRFHAGPGVGTVTRAGLTLAVGEPAINPVPRQMMTAHLTDLAAEYGYAGGFEVAIGVENGEALAQKTMNPRLGIVGGLSILGTTGIVRPFSCSAYIASIHQGIDVARANGYRHIAACTGNASEDAMRAYYQLPDIALIEMGDFAGAVLKHLKRAPVDKLSMCGGFGKLSKLAAGHLDLHSRNSSIDLRQLAQWCASHAASNATLQAAIVGANTSQEALAMALKEGVPLGDIVCARARDVAREIVPASVEVEMFAIDRQGNIVGEAR.

The protein belongs to the CbiD family.

The enzyme catalyses Co-precorrin-5B + S-adenosyl-L-methionine = Co-precorrin-6A + S-adenosyl-L-homocysteine. The protein operates within cofactor biosynthesis; adenosylcobalamin biosynthesis; cob(II)yrinate a,c-diamide from sirohydrochlorin (anaerobic route): step 6/10. In terms of biological role, catalyzes the methylation of C-1 in cobalt-precorrin-5B to form cobalt-precorrin-6A. The protein is Cobalt-precorrin-5B C(1)-methyltransferase of Paraburkholderia phymatum (strain DSM 17167 / CIP 108236 / LMG 21445 / STM815) (Burkholderia phymatum).